A 322-amino-acid chain; its full sequence is Labrum-interacting protein from saliva LIPS-2 (322 aa).

Residues 1–20 form the signal peptide; that stretch reads MKTSLPIVVLLTAVISGVHP. A disulfide bridge connects residues Cys-27 and Cys-62. Residues Asn-168 and Asn-175 are each glycosylated (N-linked (GlcNAc...) asparagine). Cys-249 and Cys-295 form a disulfide bridge.

As to quaternary structure, monomer in solution. Interacts (via the N-terminal domain) with cuticular protein Cp19 (via the C-terminus). Post-translationally, proteolytically cleaved by human mast cell tryptase and chymase. Glycosylated. Female salivary gland (at protein level). Female saliva (at protein level).

The protein localises to the secreted. Salivary protein that promotes mosquito blood feeding on the vertebrate host by inducing morphological changes in the mosquito labrum. Interacts with the mosquito labrum end tip and triggers salivation and probing. Modulates enzymatic activities of human tryptase and chymase. This is Labrum-interacting protein from saliva LIPS-2 from Aedes albopictus (Asian tiger mosquito).